The primary structure comprises 103 residues: UPF0145 protein BLi01945/BL05168 (103 aa).

This sequence belongs to the UPF0145 family.

This chain is UPF0145 protein BLi01945/BL05168, found in Bacillus licheniformis (strain ATCC 14580 / DSM 13 / JCM 2505 / CCUG 7422 / NBRC 12200 / NCIMB 9375 / NCTC 10341 / NRRL NRS-1264 / Gibson 46).